Consider the following 382-residue polypeptide: Mannosyl phosphorylinositol ceramide synthase SUR1 (382 aa).

At 1–6 (MRKELK) the chain is on the cytoplasmic side. The helical transmembrane segment at 7–27 (YLICFNILLLLSIIYYTFDLL) threads the bilayer. At 28–269 (TLCIDDTVKD…KALENHILSC (242 aa)) the chain is on the extracellular side. Residues 270–290 (VVTGFIFGFFILYGEFTFYCW) form a helical membrane-spanning segment. Residues 291–382 (LCSKNFSNLT…SKYSLGNNSS (92 aa)) are Cytoplasmic-facing. Serine 349 carries the phosphoserine modification.

This sequence belongs to the glycosyltransferase 32 family. In terms of assembly, heterodimer of SUR1 and CSG2.

It localises to the membrane. The catalysed reaction is a 1D-myo-inositol-1-phospho-N-[(R)-2-hydroxy-very-long-chain fatty acyl]-(R)-4-hydroxysphingoid base + GDP-alpha-D-mannose = an alpha-D-mannosyl-(1&lt;-&gt;6)-1D-myo-inositol-1-phospho-N-[(R)-2-hydroxy-very-long-chain fatty acyl]-(R)-4-hydroxysphingoid base + GDP + H(+). In terms of biological role, involved in the synthesis of mannosyl phosphorylinositol ceramide. Catalyzes the addition of mannosyl to phosphorylinositol ceramide. Suppressor of RVS161 mutation. This chain is Mannosyl phosphorylinositol ceramide synthase SUR1, found in Saccharomyces cerevisiae (strain ATCC 204508 / S288c) (Baker's yeast).